A 354-amino-acid polypeptide reads, in one-letter code: Methionine import ATP-binding protein MetN (354 aa).

In terms of domain architecture, ABC transporter spans 8 to 250 (LDHIDITFRQ…PKEALTQEFI (243 aa)). 42–49 (GYSGAGKS) contributes to the ATP binding site.

Belongs to the ABC transporter superfamily. Methionine importer (TC 3.A.1.24) family. As to quaternary structure, the complex is composed of two ATP-binding proteins (MetN), two transmembrane proteins (MetI) and a solute-binding protein (MetQ).

It localises to the cell membrane. The catalysed reaction is L-methionine(out) + ATP + H2O = L-methionine(in) + ADP + phosphate + H(+). The enzyme catalyses D-methionine(out) + ATP + H2O = D-methionine(in) + ADP + phosphate + H(+). Functionally, part of the ABC transporter complex MetNIQ involved in methionine import. Responsible for energy coupling to the transport system. This chain is Methionine import ATP-binding protein MetN, found in Streptococcus pyogenes serotype M1.